The chain runs to 193 residues: MFIAVEGIDGSGKTTVIAEVAKALPRVYVTREPSGGPIGRLLKEWALRGGTADPHVDALLFAADRVEHYKREIEPKLREGYIVITERYVESSIAYQGAAGVPIEYILYINSVVPRPHLTIILDVDPAEAIKRIKARERLEKFEDVEFLRRVREIYLTRARAEGYPVIDAGRPAGEVAKDVVAIIERAMASLRR.

7-14 is an ATP binding site; the sequence is GIDGSGKT.

Belongs to the thymidylate kinase family.

It carries out the reaction dTMP + ATP = dTDP + ADP. The chain is Probable thymidylate kinase from Pyrobaculum calidifontis (strain DSM 21063 / JCM 11548 / VA1).